The following is a 273-amino-acid chain: 3-methyl-2-oxobutanoate hydroxymethyltransferase (273 aa).

Mg(2+) is bound by residues Asp-53 and Asp-92. 3-methyl-2-oxobutanoate contacts are provided by residues 53-54 (DS), Asp-92, and Lys-120. Glu-122 provides a ligand contact to Mg(2+). Glu-189 functions as the Proton acceptor in the catalytic mechanism.

Belongs to the PanB family. In terms of assembly, homodecamer; pentamer of dimers. Mg(2+) is required as a cofactor.

Its subcellular location is the cytoplasm. It carries out the reaction 3-methyl-2-oxobutanoate + (6R)-5,10-methylene-5,6,7,8-tetrahydrofolate + H2O = 2-dehydropantoate + (6S)-5,6,7,8-tetrahydrofolate. Its pathway is cofactor biosynthesis; (R)-pantothenate biosynthesis; (R)-pantoate from 3-methyl-2-oxobutanoate: step 1/2. Its function is as follows. Catalyzes the reversible reaction in which hydroxymethyl group from 5,10-methylenetetrahydrofolate is transferred onto alpha-ketoisovalerate to form ketopantoate. In Cupriavidus taiwanensis (strain DSM 17343 / BCRC 17206 / CCUG 44338 / CIP 107171 / LMG 19424 / R1) (Ralstonia taiwanensis (strain LMG 19424)), this protein is 3-methyl-2-oxobutanoate hydroxymethyltransferase.